Consider the following 568-residue polypeptide: Poly(A) polymerase (568 aa).

Residues tyrosine 87–serine 89, serine 99–aspartate 102, aspartate 100–aspartate 102, aspartate 154, lysine 215, tyrosine 224, and glycine 233–valine 234 each bind ATP. Mg(2+)-binding residues include aspartate 100, aspartate 102, and aspartate 154. Residues serine 452 and serine 550 each carry the phosphoserine modification. The interval asparagine 525–asparagine 568 is disordered. Residues lysine 536–serine 550 are compositionally biased toward basic and acidic residues.

The protein belongs to the poly(A) polymerase family. Component of the cleavage and polyadenylation factor (CPF) complex, which is composed of PTI1, SYC1, SSU72, GLC7, MPE1, REF2, PFS2, PTA1, YSH1/BRR5, SWD2, CFT2/YDH1, YTH1, CFT1/YHH1, FIP1 and PAP1. Interacts with FIR1 and RRP6. Mg(2+) serves as cofactor. Mn(2+) is required as a cofactor.

The protein localises to the nucleus. The catalysed reaction is RNA(n) + ATP = RNA(n)-3'-adenine ribonucleotide + diphosphate. Functionally, polymerase component of the cleavage and polyadenylation factor (CPF) complex, which plays a key role in polyadenylation-dependent pre-mRNA 3'-end formation and cooperates with cleavage factors including the CFIA complex and NAB4/CFIB. The chain is Poly(A) polymerase (PAP1) from Saccharomyces cerevisiae (strain ATCC 204508 / S288c) (Baker's yeast).